We begin with the raw amino-acid sequence, 154 residues long: Myoglobin (154 aa).

Residues 2-148 form the Globin domain; the sequence is GLSDGEWQLV…FRNDIAAKYK (147 aa). At serine 4 the chain carries Phosphoserine. Histidine 65 serves as a coordination point for nitrite. Position 65 (histidine 65) interacts with O2. Residue threonine 68 is modified to Phosphothreonine. Histidine 94 contributes to the heme b binding site.

Belongs to the globin family. Monomeric.

Its subcellular location is the cytoplasm. The protein resides in the sarcoplasm. The catalysed reaction is Fe(III)-heme b-[protein] + nitric oxide + H2O = Fe(II)-heme b-[protein] + nitrite + 2 H(+). The enzyme catalyses H2O2 + AH2 = A + 2 H2O. Functionally, monomeric heme protein which primary function is to store oxygen and facilitate its diffusion within muscle tissues. Reversibly binds oxygen through a pentacoordinated heme iron and enables its timely and efficient release as needed during periods of heightened demand. Depending on the oxidative conditions of tissues and cells, and in addition to its ability to bind oxygen, it also has a nitrite reductase activity whereby it regulates the production of bioactive nitric oxide. Under stress conditions, like hypoxia and anoxia, it also protects cells against reactive oxygen species thanks to its pseudoperoxidase activity. The protein is Myoglobin (MB) of Vulpes chama (Cape fox).